Consider the following 950-residue polypeptide: Nonsense-mediated mRNA decay factor SMG8 (950 aa).

2 disordered regions span residues 560-607 (HTGK…LSPT) and 624-651 (NESQ…ADTE). Residues 568-582 (QDEDGEEDAEDEEGQ) show a composition bias toward acidic residues. The segment covering 593-607 (QNTASNGCSQPLSPT) has biased composition (polar residues). Low complexity predominate over residues 624 to 648 (NESQASSEQLSNSEQNSTSSGTSSA).

The protein belongs to the SMG8 family.

Involved in nonsense-mediated decay (NMD) of mRNAs containing premature stop codons. Probable component of kinase complex containing nonC and recruited to stalled ribosomes. This is Nonsense-mediated mRNA decay factor SMG8 from Drosophila yakuba (Fruit fly).